Reading from the N-terminus, the 420-residue chain is Dachshund homolog dac-1 (420 aa).

Residues 23–77 (PSSSSSSSNNSSSNTSSSNFLSPYEYQESSTSPRDTTDSSGESSLSSSGSSSSLN) form a disordered region. Composition is skewed to low complexity over residues 24-41 (SSSSSSSNNSSSNTSSSN) and 51-77 (SSTSPRDTTDSSGESSLSSSGSSSSLN). The tract at residues 85–171 (KLIKFRGHNV…LLKTSDFEKL (87 aa)) is DACHbox-N. The span at 242-258 (NSFERADDDDQNQRDAD) shows a compositional bias: basic and acidic residues. Residues 242–321 (NSFERADDDD…SSSSSGKNDE (80 aa)) form a disordered region. Positions 263–273 (LNLSKSGGNSE) are enriched in polar residues. A compositionally biased stretch (low complexity) spans 297–317 (GGSNSNSLSMSMEAGSSSSSG).

The protein belongs to the DACH/dachshund family. As to expression, expressed in AFD, AWC, ASE and ASK neurons. Expressed in the alae.

The protein resides in the nucleus. In terms of biological role, transcription factor. Plays a role in the thermotactic response. This chain is Dachshund homolog dac-1, found in Caenorhabditis elegans.